The primary structure comprises 129 residues: MKLFTGLIFCSLVLGVHSQWLSFLGEAYEGAKDMLRAYSDMREANFKNSDKYFHARGNYDAAQRGPGGAWAAKVISDARENVQRVTDWLKHGDSGHGVEDSRADQAANEWGRSGKDPNHFRPPGLPDKY.

The signal sequence occupies residues 1–18 (MKLFTGLIFCSLVLGVHS). Position 19 is a pyrrolidone carboxylic acid (Gln-19). Over residues 90–103 (KHGDSGHGVEDSRA) the composition is skewed to basic and acidic residues. Residues 90 to 129 (KHGDSGHGVEDSRADQAANEWGRSGKDPNHFRPPGLPDKY) are disordered.

It belongs to the SAA family. In terms of assembly, apolipoprotein of the HDL complex.

It localises to the secreted. Functionally, major acute phase reactant. The polypeptide is Serum amyloid A-2 protein (Sus scrofa (Pig)).